The chain runs to 57 residues: Gene 19.3 protein (57 aa).

The sequence is that of Gene 19.3 protein (19.3) from Escherichia coli (Bacteriophage T3).